A 950-amino-acid polypeptide reads, in one-letter code: A disintegrin and metalloproteinase with thrombospondin motifs 15 (950 aa).

The first 18 residues, 1-18, serve as a signal peptide directing secretion; the sequence is MLLLGISILALAWRPAGS. Positions 19–212 are excised as a propeptide; that stretch reads SEPEWEVVVP…NRRRSGRAKR (194 aa). The N-linked (GlcNAc...) asparagine glycan is linked to asparagine 141. Residues 144–172 are disordered; that stretch reads APEAQRHSQGAHLLQRRGAPVGPSGDPTS. A Cysteine switch motif is present at residues 172–179; that stretch reads SRCGVASG. Cysteine 174 provides a ligand contact to Zn(2+). The Peptidase M12B domain maps to 218–427; sequence RYVETLVVAD…GHGDCLLDQP (210 aa). 11 disulfide bridges follow: cysteine 293-cysteine 345, cysteine 322-cysteine 327, cysteine 339-cysteine 422, cysteine 377-cysteine 406, cysteine 448-cysteine 470, cysteine 459-cysteine 480, cysteine 465-cysteine 499, cysteine 493-cysteine 504, cysteine 528-cysteine 565, cysteine 532-cysteine 570, and cysteine 543-cysteine 555. Histidine 361 contacts Zn(2+). Glutamate 362 is an active-site residue. The Zn(2+) site is built by histidine 365 and histidine 371. The 88-residue stretch at 428 to 515 folds into the Disintegrin domain; the sequence is SKPITLPEDL…ERHNPNKYRV (88 aa). A TSP type-1 1 domain is found at 516–571; it reads DGSWAKWEPYGSCSRTCGGGVQLARRQCSNPTPANGGKYCEGVRVKYRSCNLEPCP. N-linked (GlcNAc...) asparagine glycans are attached at residues asparagine 591, asparagine 623, and asparagine 679. The interval 701–838 is spacer; that stretch reads AIPAGASSID…SNQVEQPDNR (138 aa). Positions 798–822 are disordered; sequence FYLPKEPREDKSTRPKDPRGSPVLR. The span at 802–816 shows a compositional bias: basic and acidic residues; that stretch reads KEPREDKSTRPKDPR. TSP type-1 domains follow at residues 839 to 895 and 896 to 949; these read PPAR…EPCP and TWEL…VLRP.

Zn(2+) is required as a cofactor. The precursor is cleaved by a furin endopeptidase. In terms of processing, glycosylated. Can be O-fucosylated by POFUT2 on a serine or a threonine residue found within the consensus sequence C1-X(2)-(S/T)-C2-G of the TSP type-1 repeat domains where C1 and C2 are the first and second cysteine residue of the repeat, respectively. Fucosylated repeats can then be further glycosylated by the addition of a beta-1,3-glucose residue by the glucosyltransferase, B3GALTL. Fucosylation mediates the efficient secretion of ADAMTS family members. Can be C-glycosylated with one or two mannose molecules on tryptophan residues within the consensus sequence W-X-X-W of the TPRs. Also N-glycosylated. These other glycosylations can also facilitate secretion. In terms of tissue distribution, in the adult colon, highly expressed in the muscularis externa (inner circular smooth muscle and outer longitudinal smooth muscle), muscularis mucosa, submucosal glands, crypt, villi epithelial cells, goblet cells and lamina propria. Expressed at perimuscular and peritendious areas in the developing limbs.

The protein localises to the secreted. It localises to the extracellular space. Its subcellular location is the extracellular matrix. The protein resides in the cell surface. Its function is as follows. Metalloprotease which has proteolytic activity against the proteoglycan VCAN, cleaving it at the 'Glu-1401-|-1402-Ala' site. Cleaves VCAN in the pericellular matrix surrounding myoblasts, facilitating myoblast contact and fusion which is required for skeletal muscle development and regeneration. This Mus musculus (Mouse) protein is A disintegrin and metalloproteinase with thrombospondin motifs 15 (Adamts15).